A 156-amino-acid polypeptide reads, in one-letter code: Small ribosomal subunit protein uS7 (156 aa).

Belongs to the universal ribosomal protein uS7 family. In terms of assembly, part of the 30S ribosomal subunit. Contacts proteins S9 and S11.

In terms of biological role, one of the primary rRNA binding proteins, it binds directly to 16S rRNA where it nucleates assembly of the head domain of the 30S subunit. Is located at the subunit interface close to the decoding center, probably blocks exit of the E-site tRNA. The polypeptide is Small ribosomal subunit protein uS7 (Mycolicibacterium vanbaalenii (strain DSM 7251 / JCM 13017 / BCRC 16820 / KCTC 9966 / NRRL B-24157 / PYR-1) (Mycobacterium vanbaalenii)).